A 528-amino-acid chain; its full sequence is Drimenol cyclase drtB (528 aa).

It belongs to the HAD-like hydrolase superfamily.

The catalysed reaction is (2E,6E)-farnesyl diphosphate + H2O = (5S,9S,10S)-drim-7-en-11-ol + diphosphate. It functions in the pathway secondary metabolite biosynthesis; terpenoid biosynthesis. Its function is as follows. Drimenol cyclase; part of the gene cluster that mediates the biosynthesis of various drimane-type sesquiterpene esters, compounds that exhibit diverse biological activities and are widely present in eukaryotes. The pathway begins with the synthesis of the backbone drimenol by the terpene cyclase drtB using farnesyl pyrophosphate (FPP) as substrate. The cytochrome P450 monooxygenase drtD is then responsible for the hydroxylations at C-6, C-9 and C-12, as well as the oxidation of hydroxyl groups at C-6 and C-11 to a ketone and an aldehyde, respectively. Then, the biosynthesis can go in two directions, either the hydroxylated drimenol is further hydroxylated at C-2 and C-3 by an enzyme(s) not associated with the drt cluster, or the FAD-binding oxidoreductase drtC further oxidizes C-11 or C-12 to form the butyrolactone ring. DrtB, drtD and drtC are solely responsible for the formation of the different drimane structures observed during drimane sesquiterpenes biosynthesis. The polyketide synthase drtA synthesizes different lengths (C6 and C8) of PKS chains, which are then oxidized to varying degrees by the short-chain dehydrogenase drtF. Finally, these PKS chains are transferred onto drimane sesquiterpenes by the acyltransferase drtE, forming the sesquiterpene esters. In addition to the different fatty acyl-CoA chains produced by drtA, drtE is also able to use cinnamoyl-CoA as a substrate. The sequence is that of Drimenol cyclase drtB from Aspergillus calidoustus.